A 194-amino-acid chain; its full sequence is Protein GrpE (194 aa).

Basic and acidic residues-rich tracts occupy residues 1–19 and 26–44; these read MSKE…ENTS and KKEA…NQKL. The tract at residues 1 to 44 is disordered; the sequence is MSKEEFPSEKNLDKEENTSKPKKAVKKEAAKGEETKKNNENQKL.

It belongs to the GrpE family. In terms of assembly, homodimer.

It is found in the cytoplasm. Its function is as follows. Participates actively in the response to hyperosmotic and heat shock by preventing the aggregation of stress-denatured proteins, in association with DnaK and GrpE. It is the nucleotide exchange factor for DnaK and may function as a thermosensor. Unfolded proteins bind initially to DnaJ; upon interaction with the DnaJ-bound protein, DnaK hydrolyzes its bound ATP, resulting in the formation of a stable complex. GrpE releases ADP from DnaK; ATP binding to DnaK triggers the release of the substrate protein, thus completing the reaction cycle. Several rounds of ATP-dependent interactions between DnaJ, DnaK and GrpE are required for fully efficient folding. The polypeptide is Protein GrpE (Lactobacillus acidophilus (strain ATCC 700396 / NCK56 / N2 / NCFM)).